The sequence spans 192 residues: YTEDDLGSGDYDSMKEPCFREENAHFNRIFLPTVYSIIFLTGIVGNGLVILVMGYQKKLRSMTDKYRLHLSVADLLFVLTLPFWAVDAVANWYFGQFLCKAVHVIYTVNLYSSVLILAFISLDRYLAIVHATNSQRPRKLLAEKVVYVGVWLPAVLLTIPDLIFADIKEADERYICDRFYPSDLWLVVFQFQ.

Tyr1 is subject to Sulfotyrosine. The important for chemokine binding and signaling stretch occupies residues 1 to 11 (YTEDDLGSGDY). The Extracellular segment spans residues 1 to 28 (YTEDDLGSGDYDSMKEPCFREENAHFNR). Ser8 carries an O-linked (Xyl...) (chondroitin sulfate) serine glycan. Tyr11 carries the sulfotyrosine modification. The helical transmembrane segment at 29–53 (IFLPTVYSIIFLTGIVGNGLVILVM) threads the bilayer. At 54 to 67 (GYQKKLRSMTDKYR) the chain is on the cytoplasmic side. A helical transmembrane segment spans residues 68 to 89 (LHLSVADLLFVLTLPFWAVDAV). Residues 84–87 (WAVD) form a chemokine binding region. Residues 90–100 (ANWYFGQFLCK) lie on the Extracellular side of the membrane. An intrachain disulfide couples Cys99 to Cys176. A helical membrane pass occupies residues 101–120 (AVHVIYTVNLYSSVLILAFI). The chemokine binding stretch occupies residues 103–107 (HVIYT). Residues 121–144 (SLDRYLAIVHATNSQRPRKLLAEK) are Cytoplasmic-facing. Residues 123–125 (DRY) carry the Important for signaling motif. Residues 125-137 (YLAIVHATNSQRP) form an involved in dimerization; when bound to chemokine region. A helical membrane pass occupies residues 145 to 164 (VVYVGVWLPAVLLTIPDLIF). Topologically, residues 165 to 185 (ADIKEADERYICDRFYPSDLW) are extracellular. Residues 176–180 (CDRFY) form a chemokine binding, important for signaling region. A helical membrane pass occupies residues 186 to 192 (LVVFQFQ).

The protein belongs to the G-protein coupled receptor 1 family. As to quaternary structure, monomer. Can form homodimers. Interacts with CD164. Interacts with ARRB2; the interaction is dependent on the C-terminal phosphorylation of CXCR4 and allows activation of MAPK1 and MAPK3. Interacts with ARR3; the interaction is dependent on the C-terminal phosphorylation of CXCR4 and modulates calcium mobilization. Interacts with RNF113A; the interaction, enhanced by CXCL12, promotes CXCR4 ubiquitination and subsequent degradation. Interacts (via the cytoplasmic C-terminal) with ITCH (via the WW domains I and II); the interaction, enhanced by CXCL12, promotes CXCR4 ubiquitination and leads to its degradation. Interacts with extracellular ubiquitin. Interacts with DBN1; this interaction is enhanced by antigenic stimulation. Following LPS binding, may form a complex with GDF5, HSP90AA1 and HSPA8. In terms of processing, phosphorylated on agonist stimulation. Rapidly phosphorylated on serine and threonine residues in the C-terminal. Ubiquitinated after ligand binding, leading to its degradation. Ubiquitinated by ITCH at the cell membrane on agonist stimulation. The ubiquitin-dependent mechanism, endosomal sorting complex required for transport (ESCRT), then targets CXCR4 for lysosomal degradation. This process is dependent also on prior Ser-/Thr-phosphorylation in the C-terminal of CXCR4. Also binding of ARRB1 to STAM negatively regulates CXCR4 sorting to lysosomes though modulating ubiquitination of SFR5S. Post-translationally, sulfation is required for efficient binding of CXCL12/SDF-1alpha and promotes its dimerization. In terms of processing, O- and N-glycosylated. N-glycosylation can mask coreceptor function. The O-glycosylation chondroitin sulfate attachment does not affect interaction with CXCL12/SDF-1alpha nor its coreceptor activity.

The protein localises to the cell membrane. The protein resides in the cell junction. Its subcellular location is the early endosome. It localises to the late endosome. It is found in the lysosome. In terms of biological role, receptor for the C-X-C chemokine CXCL12/SDF-1 that transduces a signal by increasing intracellular calcium ion levels and enhancing MAPK1/MAPK3 activation. Involved in the AKT signaling cascade. Plays a role in regulation of cell migration, e.g. during wound healing. Acts as a receptor for extracellular ubiquitin; leading to enhanced intracellular calcium ions and reduced cellular cAMP levels. Binds bacterial lipopolysaccharide (LPS) et mediates LPS-induced inflammatory response, including TNF secretion by monocytes. Involved in hematopoiesis and in cardiac ventricular septum formation. Also plays an essential role in vascularization of the gastrointestinal tract, probably by regulating vascular branching and/or remodeling processes in endothelial cells. Involved in cerebellar development. In the CNS, could mediate hippocampal-neuron survival. In Ovis aries (Sheep), this protein is C-X-C chemokine receptor type 4 (CXCR4).